A 227-amino-acid chain; its full sequence is Cytochrome c oxidase subunit 2 (227 aa).

The Mitochondrial intermembrane segment spans residues 1-14; sequence MAYPVQLGFQDAAS. The chain crosses the membrane as a helical span at residues 15 to 45; it reads PIMEELLYFHDHTLMIMFLISSLVLYIISLM. Residues 46-59 lie on the Mitochondrial matrix side of the membrane; sequence LTTELMHTNTMDAQ. Residues 60–87 form a helical membrane-spanning segment; sequence EVETVWTILPAAILILIALPSLRILYMM. The Mitochondrial intermembrane portion of the chain corresponds to 88–227; it reads DEITTPSLTL…HFEEWLLSML (140 aa). Positions 161, 196, 198, 200, 204, and 207 each coordinate Cu cation. E198 serves as a coordination point for Mg(2+).

It belongs to the cytochrome c oxidase subunit 2 family. In terms of assembly, component of the cytochrome c oxidase (complex IV, CIV), a multisubunit enzyme composed of 14 subunits. The complex is composed of a catalytic core of 3 subunits MT-CO1, MT-CO2 and MT-CO3, encoded in the mitochondrial DNA, and 11 supernumerary subunits COX4I, COX5A, COX5B, COX6A, COX6B, COX6C, COX7A, COX7B, COX7C, COX8 and NDUFA4, which are encoded in the nuclear genome. The complex exists as a monomer or a dimer and forms supercomplexes (SCs) in the inner mitochondrial membrane with NADH-ubiquinone oxidoreductase (complex I, CI) and ubiquinol-cytochrome c oxidoreductase (cytochrome b-c1 complex, complex III, CIII), resulting in different assemblies (supercomplex SCI(1)III(2)IV(1) and megacomplex MCI(2)III(2)IV(2)). Found in a complex with TMEM177, COA6, COX18, COX20, SCO1 and SCO2. Interacts with TMEM177 in a COX20-dependent manner. Interacts with COX20. Interacts with COX16. Cu cation is required as a cofactor.

Its subcellular location is the mitochondrion inner membrane. The catalysed reaction is 4 Fe(II)-[cytochrome c] + O2 + 8 H(+)(in) = 4 Fe(III)-[cytochrome c] + 2 H2O + 4 H(+)(out). In terms of biological role, component of the cytochrome c oxidase, the last enzyme in the mitochondrial electron transport chain which drives oxidative phosphorylation. The respiratory chain contains 3 multisubunit complexes succinate dehydrogenase (complex II, CII), ubiquinol-cytochrome c oxidoreductase (cytochrome b-c1 complex, complex III, CIII) and cytochrome c oxidase (complex IV, CIV), that cooperate to transfer electrons derived from NADH and succinate to molecular oxygen, creating an electrochemical gradient over the inner membrane that drives transmembrane transport and the ATP synthase. Cytochrome c oxidase is the component of the respiratory chain that catalyzes the reduction of oxygen to water. Electrons originating from reduced cytochrome c in the intermembrane space (IMS) are transferred via the dinuclear copper A center (CU(A)) of subunit 2 and heme A of subunit 1 to the active site in subunit 1, a binuclear center (BNC) formed by heme A3 and copper B (CU(B)). The BNC reduces molecular oxygen to 2 water molecules using 4 electrons from cytochrome c in the IMS and 4 protons from the mitochondrial matrix. This Hapalemur griseus (Gray gentle lemur) protein is Cytochrome c oxidase subunit 2 (MT-CO2).